A 224-amino-acid chain; its full sequence is Phosphoglycolate phosphatase (224 aa).

Aspartate 11 serves as the catalytic Nucleophile. Aspartate 11, aspartate 13, and aspartate 177 together coordinate Mg(2+).

The protein belongs to the HAD-like hydrolase superfamily. CbbY/CbbZ/Gph/YieH family. Mg(2+) is required as a cofactor.

It catalyses the reaction 2-phosphoglycolate + H2O = glycolate + phosphate. The protein operates within organic acid metabolism; glycolate biosynthesis; glycolate from 2-phosphoglycolate: step 1/1. Functionally, specifically catalyzes the dephosphorylation of 2-phosphoglycolate. Is involved in the dissimilation of the intracellular 2-phosphoglycolate formed during the DNA repair of 3'-phosphoglycolate ends, a major class of DNA lesions induced by oxidative stress. The sequence is that of Phosphoglycolate phosphatase from Haemophilus influenzae (strain ATCC 51907 / DSM 11121 / KW20 / Rd).